The chain runs to 329 residues: Serpentine receptor class alpha-8 (329 aa).

A run of 6 helical transmembrane segments spans residues 26–46 (VDLITSFFTYMLSIIAIKMVL), 60–80 (FLNIFYANLYQIVYSIDVVVI), 141–161 (IFVGSFIAIVVMISTTSTGKL), 187–207 (TIHFYISTVVSLFNLAASVAL), 231–251 (VIESTETICFLNFTQFVFMFI), and 273–293 (FWVVWCYTVPFIALTFPLLLI).

This sequence belongs to the nematode receptor-like protein sra family.

The protein localises to the membrane. This Caenorhabditis elegans protein is Serpentine receptor class alpha-8 (sra-8).